Here is a 215-residue protein sequence, read N- to C-terminus: Large ribosomal subunit protein eL15 (215 aa).

The segment at 179-215 (GTVKHKWKKKEKEREQKKRHEATKYYRLQNYDKLPGK) is disordered. Basic and acidic residues predominate over residues 188-202 (KEKEREQKKRHEATK).

It belongs to the eukaryotic ribosomal protein eL15 family.

The sequence is that of Large ribosomal subunit protein eL15 from Sulfurisphaera tokodaii (strain DSM 16993 / JCM 10545 / NBRC 100140 / 7) (Sulfolobus tokodaii).